The sequence spans 73 residues: Small ribosomal subunit protein bS18c (73 aa).

Belongs to the bacterial ribosomal protein bS18 family. In terms of assembly, part of the 30S ribosomal subunit.

The protein localises to the plastid. Its subcellular location is the chloroplast. The sequence is that of Small ribosomal subunit protein bS18c (rps18) from Guillardia theta (Cryptophyte).